We begin with the raw amino-acid sequence, 103 residues long: Large ribosomal subunit protein P1 (103 aa).

The interval 66-103 is disordered; sequence PAAGAPAAGAAGGAVEEKKEEKKAESEDESDDDMGLFD. A compositionally biased stretch (basic and acidic residues) spans 80-90; sequence VEEKKEEKKAE. Residues 91–103 are compositionally biased toward acidic residues; sequence SEDESDDDMGLFD.

This sequence belongs to the eukaryotic ribosomal protein P1/P2 family. P1 and P2 exist as dimers at the large ribosomal subunit.

Its function is as follows. Plays an important role in the elongation step of protein synthesis. The chain is Large ribosomal subunit protein P1 from Polyorchis penicillatus (Hydromedusa).